The sequence spans 154 residues: MATFSQKPAEVEKKWVIIDAEGLVVGRLASIIAMRLRGKHKATFTPHVDDGDNVIVINAEKVVFTGKKYSDKVYYWHTGYAGGIKERSARQIIEGRFPERVLEKAVERMVPRGPLGRRQMKNLRVYAGSNHPHEAQQPVALDVAALNKKNVRSA.

Belongs to the universal ribosomal protein uL13 family. As to quaternary structure, part of the 50S ribosomal subunit.

Functionally, this protein is one of the early assembly proteins of the 50S ribosomal subunit, although it is not seen to bind rRNA by itself. It is important during the early stages of 50S assembly. The protein is Large ribosomal subunit protein uL13 of Rhizobium johnstonii (strain DSM 114642 / LMG 32736 / 3841) (Rhizobium leguminosarum bv. viciae).